A 150-amino-acid chain; its full sequence is MGNVISKVKSLLGFEDYEEYDEYEEEQYEEQVKDEDEIEPVITNKKNSKVVNIHTSSTTKVTITKPIDYEEATEICEALKNRRIVLVNTTVLELKIAQRLLDFISGSCYALGGELQQIEKGVYILSPSNVEVTNELKNELSSKALFNWSK.

Belongs to the SepF family. In terms of assembly, homodimer. Interacts with FtsZ.

It localises to the cytoplasm. Functionally, cell division protein that is part of the divisome complex and is recruited early to the Z-ring. Probably stimulates Z-ring formation, perhaps through the cross-linking of FtsZ protofilaments. Its function overlaps with FtsA. The chain is Cell division protein SepF from Clostridium beijerinckii (strain ATCC 51743 / NCIMB 8052) (Clostridium acetobutylicum).